Consider the following 422-residue polypeptide: 5-hydroxytryptamine receptor 1A (422 aa).

The disordered stretch occupies residues 1 to 23 (MDVLSPGQGNNTTSPPAPFETGG). Topologically, residues 1 to 38 (MDVLSPGQGNNTTSPPAPFETGGNTTGISDVTFSYQVI) are extracellular. Asparagine 10, asparagine 11, and asparagine 24 each carry an N-linked (GlcNAc...) asparagine glycan. A helical membrane pass occupies residues 39–59 (TSLLLGTLIFCAVLGNACVVA). Topologically, residues 60–73 (AIALERSLQNVANY) are cytoplasmic. A helical transmembrane segment spans residues 74–98 (LIGSLAVTDLMVSVLVLPMAALYQV). Residues 99–107 (LNKWTLGQV) lie on the Extracellular side of the membrane. The chain crosses the membrane as a helical span at residues 108-132 (TCDLFIALDVLCCTSSILHLCAIAL). Residues cysteine 109 and cysteine 187 are joined by a disulfide bond. 2 residues coordinate serotonin: aspartate 116 and cysteine 120. Positions 133-135 (DRY) match the DRY motif; important for ligand-induced conformation changes motif. Residues 133–152 (DRYWAITDPIDYVNKRTPRR) lie on the Cytoplasmic side of the membrane. Residues 153–174 (AAALISLTWLIGFLISIPPMLG) traverse the membrane as a helical segment. The Extracellular segment spans residues 175–193 (WRTPEDRSDPDACTISKDH). A helical transmembrane segment spans residues 194 to 216 (GYTIYSTFGAFYIPLLLMLVLYG). Residues 217–346 (RIFRAARFRI…LARERKTVKT (130 aa)) lie on the Cytoplasmic side of the membrane. Residues 235–262 (KTGADTRHGASPAPQPKKSVNGESGSRN) are disordered. Positions 314, 345, 346, and 352 each coordinate 1D-myo-inositol 4-phosphate. A helical transmembrane segment spans residues 347-370 (LGIIMGTFILCWLPFFIVALVLPF). The Extracellular segment spans residues 371 to 378 (CESSCHMP). The helical transmembrane segment at 379 to 403 (TLLGAIINWLGYSNSLLNPVIYAYF) threads the bilayer. An NPxxY motif; important for ligand-induced conformation changes and signaling motif is present at residues 396 to 400 (NPVIY). 3 residues coordinate 1D-myo-inositol 4-phosphate: phenylalanine 403, asparagine 404, and lysine 405. Over 404–422 (NKDFQNAFKKIIKCKFCRQ) the chain is Cytoplasmic.

It belongs to the G-protein coupled receptor 1 family. 5-hydroxytryptamine receptor subfamily. HTR1A sub-subfamily. In terms of assembly, heterodimer; heterodimerizes with GPER1. Interacts with YIF1B. Interacts with GPR39 and GALR1.

Its subcellular location is the cell membrane. The protein localises to the cell projection. The protein resides in the dendrite. G-protein coupled receptor activity is regulated by lipids: phosphatidylinositol 4-phosphate increases HTR1A-mediated activity. Functionally, G-protein coupled receptor for 5-hydroxytryptamine (serotonin). Also functions as a receptor for various drugs and psychoactive substances. Ligand binding causes a conformation change that triggers signaling via guanine nucleotide-binding proteins (G proteins) and modulates the activity of downstream effectors, such as adenylate cyclase. HTR1A is coupled to G(i)/G(o) G alpha proteins and mediates inhibitory neurotransmission: signaling inhibits adenylate cyclase activity and activates a phosphatidylinositol-calcium second messenger system that regulates the release of Ca(2+) ions from intracellular stores. Beta-arrestin family members regulate signaling by mediating both receptor desensitization and resensitization processes. This Gorilla gorilla gorilla (Western lowland gorilla) protein is 5-hydroxytryptamine receptor 1A (HTR1A).